The following is a 320-amino-acid chain: MKMINKLIVPVTASALLLGACGASATDSKENTLISSKAGDVTVADTMKKIGKDQIANASFTEMLNKILADKYKNKVNDKKIDEQIEKMQKQYGGKDKFEKALQQQGLTADKYKENLRTAAYHKELLSDKIKISDSEIKEDSKKASHILIKVKSKKSDKEGLDDKEAKQKAEEIQKEVSKDPSKFGEIAKKESMDTGSAKKDGELGYVLKGQTDKDFEKALFKLKDGEVSDVVKSSFGYHIIKADKPTDFNSEKQSLKEKLVDQKVQKNPKLLTDAYKDLLKEYDVDFKDRDIKSVVEDKILNPEKLKQGGAQGGQSGMSQ.

An N-terminal signal peptide occupies residues 1 to 20 (MKMINKLIVPVTASALLLGA). A lipid anchor (N-palmitoyl cysteine) is attached at C21. C21 carries S-diacylglycerol cysteine lipidation. Residues 139 to 245 (EDSKKASHIL…FGYHIIKADK (107 aa)) form the PpiC domain. The tract at residues 159-198 (EGLDDKEAKQKAEEIQKEVSKDPSKFGEIAKKESMDTGSA) is disordered.

This sequence belongs to the PrsA family.

Its subcellular location is the cell membrane. It carries out the reaction [protein]-peptidylproline (omega=180) = [protein]-peptidylproline (omega=0). Its function is as follows. Plays a major role in protein secretion by helping the post-translocational extracellular folding of several secreted proteins. This is Foldase protein PrsA from Staphylococcus aureus (strain bovine RF122 / ET3-1).